The following is an 85-amino-acid chain: 4-hydroxyphenylacetate decarboxylase small subunit (85 aa).

Positions 4, 7, 20, 34, 43, 46, 60, and 78 each coordinate [4Fe-4S] cluster.

This sequence belongs to the HPA decarboxylase small subunit family. As to quaternary structure, heterooctamer consisting of 4 large (HpdB) subunits and 4 small (HpdC) subunits, arranged as a tetramer of heterodimers. [4Fe-4S] cluster serves as cofactor.

The catalysed reaction is 4-hydroxyphenylacetate + H(+) = 4-methylphenol + CO2. The enzyme catalyses 3,4-dihydroxyphenylacetate + H(+) = 4-methylcatechol + CO2. Component of the HPA decarboxylase that decarboxylates phenylacetates with a hydroxyl group in the p-position. Active toward 4-hydroxyphenylacetate and 3,4-dihydroxyphenylacetate, forming 4-methylphenol and 4-methylcatechol, respectively. Is likely involved in the catabolism of aromatic amino acids such as tyrosine fermentation. 4-methylphenol (p-cresol) formation provides metabolic toxicity, which allows an active suppression of other microbes and may provide growth advantages for the producers in highly competitive environments. The small subunit is essential for enzymatic activity of HPA decarboxylase, and also seems to be involved in the regulation of the enzyme oligomeric state and catalytic activity. The polypeptide is 4-hydroxyphenylacetate decarboxylase small subunit (Clostridioides difficile (strain 630) (Peptoclostridium difficile)).